A 279-amino-acid polypeptide reads, in one-letter code: Prohibitin-4, mitochondrial (279 aa).

Residue Gly-2 is modified to N-acetylglycine. Topologically, residues Gly-2–Val-6 are mitochondrial matrix. A helical; Signal-anchor for type II membrane protein transmembrane segment spans residues Ala-7–Leu-28. The Mitochondrial intermembrane segment spans residues Asn-29–Arg-279.

It belongs to the prohibitin family. As to quaternary structure, component of a prohibitin multimeric complex in mitochondrial membranes. Mostly expressed in proliferative tissues, including vasculature, shoot and root apical tissues. Accumulates in dry seeds.

The protein resides in the mitochondrion inner membrane. Its function is as follows. Prohibitin probably acts as a holdase/unfoldase for the stabilization of newly synthesized mitochondrial proteins. This chain is Prohibitin-4, mitochondrial (PHB4), found in Arabidopsis thaliana (Mouse-ear cress).